A 471-amino-acid chain; its full sequence is Cysteine--tRNA ligase (471 aa).

Cys29 is a binding site for Zn(2+). The 'HIGH' region motif lies at 31-41 (LTVQSEPHVGH). Residues Cys215, His240, and Glu244 each contribute to the Zn(2+) site. The 'KMSKS' region motif lies at 271 to 275 (KMSKS). Lys274 is a binding site for ATP.

This sequence belongs to the class-I aminoacyl-tRNA synthetase family. In terms of assembly, monomer. Requires Zn(2+) as cofactor.

Its subcellular location is the cytoplasm. It carries out the reaction tRNA(Cys) + L-cysteine + ATP = L-cysteinyl-tRNA(Cys) + AMP + diphosphate. The sequence is that of Cysteine--tRNA ligase from Nocardioides sp. (strain ATCC BAA-499 / JS614).